The following is a 148-amino-acid chain: Endoribonuclease YbeY (148 aa).

Residues His113, His117, and His123 each coordinate Zn(2+).

It belongs to the endoribonuclease YbeY family. Zn(2+) serves as cofactor.

The protein localises to the cytoplasm. In terms of biological role, single strand-specific metallo-endoribonuclease involved in late-stage 70S ribosome quality control and in maturation of the 3' terminus of the 16S rRNA. The polypeptide is Endoribonuclease YbeY (Borrelia recurrentis (strain A1)).